A 130-amino-acid polypeptide reads, in one-letter code: Organic solute transporter subunit beta (130 aa).

Residues 1-35 lie on the Extracellular side of the membrane; sequence MNYSEKLTGAPPMTEVPLELLEEMLWFFRVEDATP. Residues 36-56 form a helical membrane-spanning segment; that stretch reads WNCSMFVLAALVAIISFILLG. Residues 57-130 are Cytoplasmic-facing; the sequence is RNIQANRNQK…HLPDPQEPES (74 aa). The interval 99–130 is disordered; that stretch reads LSEKPTLAQGEMEAKCSDVPRVHLPDPQEPES. A compositionally biased stretch (basic and acidic residues) spans 110-124; sequence MEAKCSDVPRVHLPD.

It belongs to the OST-beta family. Interacts with SLC51A. The Ost-alpha/Ost-beta complex is a heterodimer composed of alpha (SLC51A) and beta (SLC51B) subunit; induces the transport of SLC51A from the endoplasmic reticulum to the plasma membrane.

It is found in the cell membrane. The enzyme catalyses taurocholate(out) = taurocholate(in). The catalysed reaction is estrone 3-sulfate(out) = estrone 3-sulfate(in). It catalyses the reaction dehydroepiandrosterone 3-sulfate(out) = dehydroepiandrosterone 3-sulfate(in). It carries out the reaction tauroursodeoxycholate(out) = tauroursodeoxycholate(in). The enzyme catalyses glycoursodeoxycholate(out) = glycoursodeoxycholate(in). The catalysed reaction is glycocholate(out) = glycocholate(in). It catalyses the reaction taurochenodeoxycholate(out) = taurochenodeoxycholate(in). It carries out the reaction glycochenodeoxycholate(out) = glycochenodeoxycholate(in). The enzyme catalyses taurodeoxycholate(out) = taurodeoxycholate(in). The catalysed reaction is glycodeoxycholate(out) = glycodeoxycholate(in). It catalyses the reaction prostaglandin E2(out) = prostaglandin E2(in). Its function is as follows. Essential component of the Ost-alpha/Ost-beta complex, a heterodimer that acts as the intestinal basolateral transporter responsible for bile acid export from enterocytes into portal blood. The Ost-alpha/Ost-beta complex efficiently transports the major species of bile acids (taurocholate). Taurine conjugates are transported more efficiently across the basolateral membrane than glycine-conjugated bile acids. Can also transport steroids such as estrone 3-sulfate and dehydroepiandrosterone 3-sulfate, therefore playing a role in the enterohepatic circulation of sterols. Able to transport eicosanoids such as prostaglandin E2. Modulates SLC51A glycosylation, membrane trafficking and stability activities. This chain is Organic solute transporter subunit beta (SLC51B), found in Bos taurus (Bovine).